Here is a 234-residue protein sequence, read N- to C-terminus: MDDHLYRRRAAERALDYVESGMAIGLGTGSTASFMLRGLAARLADGRLQRVVGVPTSEQTAVLARELGIPLTTLDRHPSLDLALDGADEIDPHLRLIKGLGGAMLREKIVAASAARFVVMASVSKRVERLGERSPLPVEVVTFGMPLCIRRLAALGGEPVLRCDHSGAPFVTDEGNLILDCHFGVIADPEALAAAICAIPGVVAHGLFLGMASLAVIAGPDGIVELECPDASRR.

Residues 28–31 (TGST), 85–88 (DGAD), and 98–101 (KGLG) contribute to the substrate site. E107 functions as the Proton acceptor in the catalytic mechanism. Position 125 (K125) interacts with substrate.

The protein belongs to the ribose 5-phosphate isomerase family. In terms of assembly, homodimer.

It carries out the reaction aldehydo-D-ribose 5-phosphate = D-ribulose 5-phosphate. It participates in carbohydrate degradation; pentose phosphate pathway; D-ribose 5-phosphate from D-ribulose 5-phosphate (non-oxidative stage): step 1/1. In terms of biological role, catalyzes the reversible conversion of ribose-5-phosphate to ribulose 5-phosphate. This is Ribose-5-phosphate isomerase A from Roseiflexus castenholzii (strain DSM 13941 / HLO8).